The sequence spans 368 residues: Phosphotransferase IIC component GlvC (368 aa).

Over 1 to 11 the chain is Periplasmic; sequence MLSQIQRFGGA. A PTS EIIC type-1 domain is found at 1–368; it reads MLSQIQRFGG…VGNMGGGLID (368 aa). Residues 12 to 32 form a helical membrane-spanning segment; that stretch reads MFTPVLLFPFAGIVVGLAILL. Topologically, residues 33-59 are cytoplasmic; it reads QNPMFVGESLTDPNSLFAQIVHIIEEG. The helical transmembrane segment at 60-80 threads the bilayer; that stretch reads GWTVFRNMPLIFAVGLPIGLA. Over 81–86 the chain is Periplasmic; sequence KQAQGR. Residues 87–107 form a helical membrane-spanning segment; sequence ACLAVMVSFLTWNYFINAMGM. The Cytoplasmic portion of the chain corresponds to 108–129; that stretch reads TWGSYFGVDFTQDAVAGSGLTM. Residues 130–150 traverse the membrane as a helical segment; sequence MAGIKTLDTSIIGAIIISGIV. Residues 151–173 lie on the Periplasmic side of the membrane; that stretch reads TALHNRLFDKKLPVFLGIFQGTS. The helical transmembrane segment at 174-194 threads the bilayer; sequence YVVIIAFLVMIPCAWLTLLGW. Over 195-198 the chain is Cytoplasmic; sequence PKVQ. The chain crosses the membrane as a helical span at residues 199 to 221; it reads MGIESLQAFLRSAGALGVWVYTF. The Periplasmic portion of the chain corresponds to 222 to 224; sequence LER. Residues 225-245 traverse the membrane as a helical segment; the sequence is ILIPTGLHHFIYGQFIFGPAA. The Cytoplasmic segment spans residues 246-276; sequence VEGGIQMYWAQHLQEFSLSAEPLKSLFPEGG. Residues 277 to 297 form a helical membrane-spanning segment; sequence FALHGNSKIFGAVGISLAMYF. Topologically, residues 298-306 are periplasmic; the sequence is TAAPENRVK. A helical membrane pass occupies residues 307-327; the sequence is VAGLLIPATLTAMLVGITEPL. Glutamate 328 is a topological domain (cytoplasmic). A helical membrane pass occupies residues 329–349; that stretch reads FTFLFISPLLFAVHAVLAASM. Residues 350 to 368 are Periplasmic-facing; that stretch reads STVMYLFGVVGNMGGGLID.

It is found in the cell inner membrane. The phosphoenolpyruvate-dependent sugar phosphotransferase system (PTS), a major carbohydrate active -transport system, catalyzes the phosphorylation of incoming sugar substrates concomitant with their translocation across the cell membrane. This operon may be cryptic in wild-type K12 strains. This Escherichia coli (strain K12) protein is Phosphotransferase IIC component GlvC.